Here is a 112-residue protein sequence, read N- to C-terminus: Nucleoid-associated protein FTM_1023 (112 aa).

Belongs to the YbaB/EbfC family. In terms of assembly, homodimer.

The protein resides in the cytoplasm. It is found in the nucleoid. Functionally, binds to DNA and alters its conformation. May be involved in regulation of gene expression, nucleoid organization and DNA protection. This is Nucleoid-associated protein FTM_1023 from Francisella tularensis subsp. mediasiatica (strain FSC147).